The sequence spans 403 residues: D-galactonate dehydratase family member RspA (403 aa).

2 residues coordinate substrate: Asn-37 and His-122. Tyr-159 serves as the catalytic Proton donor/acceptor. Asp-211 lines the Mg(2+) pocket. His-213 serves as the catalytic Proton donor/acceptor. Residues Glu-237 and Glu-263 each contribute to the Mg(2+) site. Substrate contacts are provided by Glu-263, Arg-284, His-313, Asp-317, and Glu-340.

This sequence belongs to the mandelate racemase/muconate lactonizing enzyme family. GalD subfamily. Requires Mg(2+) as cofactor.

It catalyses the reaction D-mannonate = 2-dehydro-3-deoxy-D-gluconate + H2O. It carries out the reaction D-gluconate = 2-dehydro-3-deoxy-D-gluconate + H2O. In terms of biological role, has low dehydratase activity with D-mannonate and D-gluconate, suggesting that these are not physiological substrates and that it has no significant role in the in vivo degradation of these compounds. Has no detectable activity with a panel of 70 other acid sugars (in vitro). The chain is D-galactonate dehydratase family member RspA (rspA) from Halomonas elongata (strain ATCC 33173 / DSM 2581 / NBRC 15536 / NCIMB 2198 / 1H9).